The following is a 358-amino-acid chain: GTPase Obg (358 aa).

The Obg domain occupies 1–158; that stretch reads MFVDNVDIYV…RHVRLELKLI (158 aa). The OBG-type G domain occupies 159 to 355; it reads ADVGLVGFPN…LKYLLHESVR (197 aa). GTP contacts are provided by residues 165–172, 190–194, 212–215, 280–283, and 336–338; these read GFPNVGKS, FTTLI, DIPG, SKVD, and SSA. Positions 172 and 192 each coordinate Mg(2+).

It belongs to the TRAFAC class OBG-HflX-like GTPase superfamily. OBG GTPase family. In terms of assembly, monomer. Requires Mg(2+) as cofactor.

Its subcellular location is the cytoplasm. In terms of biological role, an essential GTPase which binds GTP, GDP and possibly (p)ppGpp with moderate affinity, with high nucleotide exchange rates and a fairly low GTP hydrolysis rate. Plays a role in control of the cell cycle, stress response, ribosome biogenesis and in those bacteria that undergo differentiation, in morphogenesis control. This is GTPase Obg from Wolinella succinogenes (strain ATCC 29543 / DSM 1740 / CCUG 13145 / JCM 31913 / LMG 7466 / NCTC 11488 / FDC 602W) (Vibrio succinogenes).